The primary structure comprises 39 residues: Neuropeptide F (39 aa).

Phenylalanine 39 is subject to Phenylalanine amide.

The protein belongs to the NPY family. In terms of tissue distribution, neuronal somata and fibers.

The protein localises to the secreted. May have an important physiological role in neuroregulation. This Cornu aspersum (Brown garden snail) protein is Neuropeptide F.